Reading from the N-terminus, the 353-residue chain is S-adenosylmethionine:tRNA ribosyltransferase-isomerase (353 aa).

The protein belongs to the QueA family. Monomer.

It is found in the cytoplasm. It carries out the reaction 7-aminomethyl-7-carbaguanosine(34) in tRNA + S-adenosyl-L-methionine = epoxyqueuosine(34) in tRNA + adenine + L-methionine + 2 H(+). Its pathway is tRNA modification; tRNA-queuosine biosynthesis. Its function is as follows. Transfers and isomerizes the ribose moiety from AdoMet to the 7-aminomethyl group of 7-deazaguanine (preQ1-tRNA) to give epoxyqueuosine (oQ-tRNA). The sequence is that of S-adenosylmethionine:tRNA ribosyltransferase-isomerase from Sodalis glossinidius (strain morsitans).